We begin with the raw amino-acid sequence, 360 residues long: 3-dehydroquinate synthase (360 aa).

NAD(+)-binding positions include 71–76 (DGEQYK), 105–109 (GVIGD), 129–130 (TT), lysine 142, lysine 151, and 169–172 (CLDT). Glutamate 184, histidine 247, and histidine 264 together coordinate Zn(2+).

This sequence belongs to the sugar phosphate cyclases superfamily. Dehydroquinate synthase family. Co(2+) is required as a cofactor. Zn(2+) serves as cofactor. Requires NAD(+) as cofactor.

The protein localises to the cytoplasm. The enzyme catalyses 7-phospho-2-dehydro-3-deoxy-D-arabino-heptonate = 3-dehydroquinate + phosphate. It functions in the pathway metabolic intermediate biosynthesis; chorismate biosynthesis; chorismate from D-erythrose 4-phosphate and phosphoenolpyruvate: step 2/7. Catalyzes the conversion of 3-deoxy-D-arabino-heptulosonate 7-phosphate (DAHP) to dehydroquinate (DHQ). In Erwinia tasmaniensis (strain DSM 17950 / CFBP 7177 / CIP 109463 / NCPPB 4357 / Et1/99), this protein is 3-dehydroquinate synthase.